Here is a 229-residue protein sequence, read N- to C-terminus: Urease accessory protein UreF (229 aa).

This sequence belongs to the UreF family. As to quaternary structure, ureD, UreF and UreG form a complex that acts as a GTP-hydrolysis-dependent molecular chaperone, activating the urease apoprotein by helping to assemble the nickel containing metallocenter of UreC. The UreE protein probably delivers the nickel.

Its subcellular location is the cytoplasm. Functionally, required for maturation of urease via the functional incorporation of the urease nickel metallocenter. The sequence is that of Urease accessory protein UreF from Staphylococcus aureus (strain bovine RF122 / ET3-1).